We begin with the raw amino-acid sequence, 261 residues long: Vacuolar protein sorting-associated protein 37D (261 aa).

In terms of domain architecture, VPS37 C-terminal spans 93-182 (AENCADKLQR…RRRERSAQPA (90 aa)). The disordered stretch occupies residues 172-261 (LRRRERSAQP…RPSQPEPPHR (90 aa)). The segment covering 181 to 195 (PAPTTAAAAAAAATA) has biased composition (low complexity). Pro residues-rich tracts occupy residues 215–224 (GPPPAVPRSL) and 231–261 (PVPP…PPHR).

Belongs to the VPS37 family. In terms of assembly, component of the ESCRT-I complex (endosomal sorting complex required for transport I) which consists of TSG101, VPS28, a VPS37 protein (VPS37A to -D) and MVB12A or MVB12B in a 1:1:1:1 stoichiometry. Interacts with TSG101 and MVB12A. Component of the ESCRT-I complex (endosomal sorting complex required for transport I) which consists of TSG101, VPS28, a VPS37 protein (VPS37A to -D) and UBAP1 in a 1:1:1:1 stoichiometry.

The protein localises to the late endosome membrane. Functionally, component of the ESCRT-I complex, a regulator of vesicular trafficking process. Required for the sorting of endocytic ubiquitinated cargos into multivesicular bodies. May be involved in cell growth and differentiation. This chain is Vacuolar protein sorting-associated protein 37D, found in Mus musculus (Mouse).